We begin with the raw amino-acid sequence, 744 residues long: MRYSNVIDFSICMSIKSENTFLLENPKFIKNLKFFNIHSSQEPKSPTDIRNSVENSDFNVQLENKLKNSFKQDGKQKSKKKKILSVDLDQEHIFKKKNKSKVIISAPDDLTNNSEGSFKSGKQKKKEKGKHKQNVNKDIHHTKNNRLSNLDPLDDINKDKSVIIDSSLSIEELSIKLKIPPAEIITGLFLKGISVTVNQIIDIAIATQVAQKYNFTVINQNQNNQSELDQSDKLQQVSTITSINRAPIVTILGHVDHGKTTLLDAIRNTNAAGKEIGGITQSIKAYEVNWPYNSSNQKLIFIDTPGHEAFSSMRLRCAQITDIVILIIAADDGLKPQTIEAINYISSKKTPFIVAINKIDKANLNLIRVREELATYNIISTDWGGEIQFIEISALQKRNISQLLTAICSLAEFINLKADPTELVQGSILEAYLDKTKGIVVNIIVLSGTLHIGDIIVSGHSYGRVKKIINSLGNELIQAGPSSILEVLGFYSIPQTGRYFQVVNSEKEAKKMIAQIPLSGITQTTKNILNLNPKVYNHNLNTRSLNLIIKADTQGTIDAIINSFIQISQKKIKLNILTASLGVVSNTDLDLAFSTQALIIAFNINISTNILNAAEKLNLSLRKFVLIYDLVDYVTYSMLDLVDPEYDKILIGQAEVQTTFTINKGTVAGCIVKSGKLKKDALIGVYRKNKLIYEGVINSLKRMKNDVNEVVIGNECGILSKDYHFWQSEDLIKAYELHEKAKTL.

The tract at residues 113–146 (NSEGSFKSGKQKKKEKGKHKQNVNKDIHHTKNNR) is disordered. Positions 121–134 (GKQKKKEKGKHKQN) are enriched in basic residues. The tr-type G domain occupies 244 to 417 (NRAPIVTILG…CSLAEFINLK (174 aa)). A G1 region spans residues 253-260 (GHVDHGKT). Residue 253–260 (GHVDHGKT) coordinates GTP. Positions 278 to 282 (GITQS) are G2. The interval 303-306 (DTPG) is G3. Residues 303-307 (DTPGH) and 357-360 (NKID) contribute to the GTP site. The tract at residues 357–360 (NKID) is G4. Positions 393 to 395 (SAL) are G5.

Belongs to the TRAFAC class translation factor GTPase superfamily. Classic translation factor GTPase family. IF-2 subfamily.

The protein resides in the plastid. Its subcellular location is the chloroplast. One of the essential components for the initiation of protein synthesis. Protects formylmethionyl-tRNA from spontaneous hydrolysis and promotes its binding to the 30S ribosomal subunits. Also involved in the hydrolysis of GTP during the formation of the 70S ribosomal complex. The chain is Translation initiation factor IF-2, chloroplastic (infB) from Gracilaria tenuistipitata var. liui (Red alga).